We begin with the raw amino-acid sequence, 403 residues long: Phosphoglycerate kinase (403 aa).

Residues 24-26, arginine 39, 62-65, arginine 121, and arginine 161 each bind substrate; these read DLN and HLGR. Residues lysine 211, glycine 299, glutamate 330, and 359–362 contribute to the ATP site; that span reads GGDS.

Belongs to the phosphoglycerate kinase family. In terms of assembly, monomer.

Its subcellular location is the cytoplasm. It catalyses the reaction (2R)-3-phosphoglycerate + ATP = (2R)-3-phospho-glyceroyl phosphate + ADP. Its pathway is carbohydrate degradation; glycolysis; pyruvate from D-glyceraldehyde 3-phosphate: step 2/5. This is Phosphoglycerate kinase from Rhodococcus opacus (strain B4).